The sequence spans 264 residues: Glutamate racemase (264 aa).

Residues 10 to 11 (DS) and 42 to 43 (YG) each bind substrate. Cys73 (proton donor/acceptor) is an active-site residue. Position 74-75 (74-75 (NT)) interacts with substrate. Cys183 acts as the Proton donor/acceptor in catalysis. Residue 184–185 (TH) participates in substrate binding.

It belongs to the aspartate/glutamate racemases family.

The enzyme catalyses L-glutamate = D-glutamate. It participates in cell wall biogenesis; peptidoglycan biosynthesis. Functionally, provides the (R)-glutamate required for cell wall biosynthesis. This chain is Glutamate racemase, found in Streptococcus mutans serotype c (strain ATCC 700610 / UA159).